We begin with the raw amino-acid sequence, 156 residues long: ATP synthase subunit b (156 aa).

The helical transmembrane segment at 7–29 (LLGQAISFALFVWFCMKYVWPPL) threads the bilayer.

Belongs to the ATPase B chain family. As to quaternary structure, F-type ATPases have 2 components, F(1) - the catalytic core - and F(0) - the membrane proton channel. F(1) has five subunits: alpha(3), beta(3), gamma(1), delta(1), epsilon(1). F(0) has three main subunits: a(1), b(2) and c(10-14). The alpha and beta chains form an alternating ring which encloses part of the gamma chain. F(1) is attached to F(0) by a central stalk formed by the gamma and epsilon chains, while a peripheral stalk is formed by the delta and b chains.

It localises to the cell inner membrane. Its function is as follows. F(1)F(0) ATP synthase produces ATP from ADP in the presence of a proton or sodium gradient. F-type ATPases consist of two structural domains, F(1) containing the extramembraneous catalytic core and F(0) containing the membrane proton channel, linked together by a central stalk and a peripheral stalk. During catalysis, ATP synthesis in the catalytic domain of F(1) is coupled via a rotary mechanism of the central stalk subunits to proton translocation. In terms of biological role, component of the F(0) channel, it forms part of the peripheral stalk, linking F(1) to F(0). The chain is ATP synthase subunit b from Vibrio alginolyticus.